A 503-amino-acid chain; its full sequence is Long-chain-fatty-acid--CoA ligase FadD13 (503 aa).

Belongs to the ATP-dependent AMP-binding enzyme family. Homodimer.

Its subcellular location is the cell membrane. It catalyses the reaction a long-chain fatty acid + ATP + CoA = a long-chain fatty acyl-CoA + AMP + diphosphate. The protein operates within lipid metabolism; fatty acid biosynthesis. Functionally, required for maintaining the appropriate mycolic acid composition and permeability of the envelope on its exposure to acidic pH. Catalyzes the activation of long-chain fatty acids as acyl-coenzyme A (acyl-CoA), which are then transferred to the multifunctional polyketide synthase (PKS) type III for further chain extension. This Mycobacterium tuberculosis (strain CDC 1551 / Oshkosh) protein is Long-chain-fatty-acid--CoA ligase FadD13 (fadD13).